The following is a 63-amino-acid chain: Large ribosomal subunit protein uL29 (63 aa).

It belongs to the universal ribosomal protein uL29 family.

The sequence is that of Large ribosomal subunit protein uL29 from Pectobacterium carotovorum subsp. carotovorum (strain PC1).